The following is a 106-amino-acid chain: MNFWATFSICLVGYLVYAGHLNNELQEIKSILVVMYESMEKHFSNVVDEIDSLKTDTFMMLSNLQNNTIRTWDAVVKNGKKISNLDEKINVLLTKNGVVNNVLNVQ.

In terms of processing, glycosylated.

It is found in the host cytoplasm. May be involved in formation or transport of the nucleocapsid-containing vesicles around the nuclear membrane. The chain is Glycoprotein GP16 (GP16) from Autographa californica nuclear polyhedrosis virus (AcMNPV).